We begin with the raw amino-acid sequence, 108 residues long: UPF0235 protein MM_0822 (108 aa).

The protein belongs to the UPF0235 family.

The sequence is that of UPF0235 protein MM_0822 from Methanosarcina mazei (strain ATCC BAA-159 / DSM 3647 / Goe1 / Go1 / JCM 11833 / OCM 88) (Methanosarcina frisia).